Here is a 77-residue protein sequence, read N- to C-terminus: Small ribosomal subunit protein bS18 (77 aa).

This sequence belongs to the bacterial ribosomal protein bS18 family. Part of the 30S ribosomal subunit. Forms a tight heterodimer with protein bS6.

In terms of biological role, binds as a heterodimer with protein bS6 to the central domain of the 16S rRNA, where it helps stabilize the platform of the 30S subunit. The chain is Small ribosomal subunit protein bS18 from Lactobacillus gasseri (strain ATCC 33323 / DSM 20243 / BCRC 14619 / CIP 102991 / JCM 1131 / KCTC 3163 / NCIMB 11718 / NCTC 13722 / AM63).